We begin with the raw amino-acid sequence, 151 residues long: Small ribosomal subunit protein uS15 (151 aa).

The protein belongs to the universal ribosomal protein uS15 family.

This Glycine max (Soybean) protein is Small ribosomal subunit protein uS15 (RPS13).